A 694-amino-acid polypeptide reads, in one-letter code: Acetolactate synthase catalytic subunit, mitochondrial (694 aa).

The transit peptide at 1–42 (MLRSRQATNALRAVGQTRPLRSQTAVAFTQSLNKVPSNRRSE) directs the protein to the mitochondrion. The segment covering 45–58 (VATASSTASGAFNS) has biased composition (low complexity). Residues 45-69 (VATASSTASGAFNSQVRPTPSPTFN) are disordered. The span at 59-69 (QVRPTPSPTFN) shows a compositional bias: polar residues. E140 is a thiamine diphosphate binding site. FAD is bound by residues R242, 358–379 (HGSA…LGGR), and 410–429 (EIMP…IVGD). Residues 505-585 (QHQMWTAQHF…VKVIVLNNEE (81 aa)) are thiamine pyrophosphate binding. Mg(2+)-binding residues include D556, N583, and E585.

This sequence belongs to the TPP enzyme family. As to quaternary structure, homodimer. Requires Mg(2+) as cofactor. Thiamine diphosphate is required as a cofactor.

It is found in the mitochondrion. It catalyses the reaction 2 pyruvate + H(+) = (2S)-2-acetolactate + CO2. The catalysed reaction is 2-oxobutanoate + pyruvate + H(+) = (S)-2-ethyl-2-hydroxy-3-oxobutanoate + CO2. The protein operates within amino-acid biosynthesis; L-isoleucine biosynthesis; L-isoleucine from 2-oxobutanoate: step 1/4. It participates in amino-acid biosynthesis; L-valine biosynthesis; L-valine from pyruvate: step 1/4. Acetolactate synthase catalytic subunit, mitochondrial; part of the gene cluster that mediates the biosynthesis of chlorflavonin, a fungal flavonoid with acetolactate synthase inhibitory activity. Is not direcly involved in chlorflavonin biosynthesis but acts as a self-resistant protein that effectively confers chlorflavonin resistance to the native host. As a catalytic subunit of mitochondrial acetolactate synthase, catalyzes the first of a series of common steps in the biosynthesis of the branched-chain amino acids. Catalyzes the irreversible decarboxylation of pyruvate to a bound hydroxyethyl group that then condenses with either a second pyruvate molecule to form 2-acetolactate (AL) or with 2-ketobutyrate to form 2-aceto-2-hydroxybutyrate (AHB). The first product is the precursor for valine and leucine biosynthesis, while the second leads to isoleucine. This Aspergillus candidus protein is Acetolactate synthase catalytic subunit, mitochondrial.